A 421-amino-acid chain; its full sequence is Fusaric acid cluster transcription factor FUB10 (421 aa).

Positions 16–47 (CDRCRAQKLRCHRDSGHSTDACLRCLKSGIEC) form a DNA-binding region, zn(2)-C6 fungal-type. Residues 50 to 92 (SKARPTGRPPSRQVQPTVVVEQGDTSSSSHTTDSSPSAGGTDM) form a disordered region. The span at 74-86 (TSSSSHTTDSSPS) shows a compositional bias: low complexity.

The protein resides in the nucleus. In terms of biological role, transcription factor that regulates the expression of the gene cluster that mediates the biosynthesis of fusaric acid, a mycotoxin with low to moderate toxicity to animals and humans, but with high phytotoxic properties. In Gibberella moniliformis (strain M3125 / FGSC 7600) (Maize ear and stalk rot fungus), this protein is Fusaric acid cluster transcription factor FUB10.